We begin with the raw amino-acid sequence, 282 residues long: Formamidopyrimidine-DNA glycosylase (282 aa).

Residue proline 2 is the Schiff-base intermediate with DNA of the active site. The active-site Proton donor is the glutamate 3. Catalysis depends on lysine 60, which acts as the Proton donor; for beta-elimination activity. DNA is bound by residues histidine 99, arginine 118, and lysine 163. Residues 248–282 form an FPG-type zinc finger; the sequence is WVYRRSGKNCKKCGEKILREKICGRSTHWCPNCQK. Arginine 272 acts as the Proton donor; for delta-elimination activity in catalysis.

This sequence belongs to the FPG family. As to quaternary structure, monomer. Requires Zn(2+) as cofactor.

The catalysed reaction is Hydrolysis of DNA containing ring-opened 7-methylguanine residues, releasing 2,6-diamino-4-hydroxy-5-(N-methyl)formamidopyrimidine.. It carries out the reaction 2'-deoxyribonucleotide-(2'-deoxyribose 5'-phosphate)-2'-deoxyribonucleotide-DNA = a 3'-end 2'-deoxyribonucleotide-(2,3-dehydro-2,3-deoxyribose 5'-phosphate)-DNA + a 5'-end 5'-phospho-2'-deoxyribonucleoside-DNA + H(+). Its function is as follows. Involved in base excision repair of DNA damaged by oxidation or by mutagenic agents. Acts as a DNA glycosylase that recognizes and removes damaged bases. Has a preference for oxidized purines, such as 7,8-dihydro-8-oxoguanine (8-oxoG). Has AP (apurinic/apyrimidinic) lyase activity and introduces nicks in the DNA strand. Cleaves the DNA backbone by beta-delta elimination to generate a single-strand break at the site of the removed base with both 3'- and 5'-phosphates. In Prochlorococcus marinus (strain NATL2A), this protein is Formamidopyrimidine-DNA glycosylase.